The following is a 368-amino-acid chain: Glutamine synthetase root isozyme 2 (368 aa).

Positions 19–99 (IIAEYIWVGG…VMCDCYEPNG (81 aa)) constitute a GS beta-grasp domain. Residues 38–66 (RTLSGPVDDPSKLPKWNFDGSSTGQAPGD) form a disordered region. In terms of domain architecture, GS catalytic spans 106 to 368 (KRHGAAKIFS…NGDGKGAAAP (263 aa)).

It belongs to the glutamine synthetase family. In terms of assembly, homooctamer. Found mainly in the vascular tissues of seedling roots.

It is found in the cytoplasm. It catalyses the reaction L-glutamate + NH4(+) + ATP = L-glutamine + ADP + phosphate + H(+). Functionally, plays a role in the flow of nitrogen into nitrogenous organic compounds. This chain is Glutamine synthetase root isozyme 2 (GLN2), found in Zea mays (Maize).